The primary structure comprises 183 residues: Large ribosomal subunit protein eL18 (183 aa).

The tract at residues arginine 150 to valine 183 is disordered. A compositionally biased stretch (basic residues) spans serine 161 to valine 183.

Belongs to the eukaryotic ribosomal protein eL18 family.

It is found in the cytoplasm. The chain is Large ribosomal subunit protein eL18 (RpL18) from Spodoptera frugiperda (Fall armyworm).